A 482-amino-acid chain; its full sequence is Glycogen synthase 2 (482 aa).

Lys-18 is a binding site for ADP-alpha-D-glucose.

It belongs to the glycosyltransferase 1 family. Bacterial/plant glycogen synthase subfamily.

The catalysed reaction is [(1-&gt;4)-alpha-D-glucosyl](n) + ADP-alpha-D-glucose = [(1-&gt;4)-alpha-D-glucosyl](n+1) + ADP + H(+). It functions in the pathway glycan biosynthesis; glycogen biosynthesis. In terms of biological role, synthesizes alpha-1,4-glucan chains using ADP-glucose. The sequence is that of Glycogen synthase 2 from Bradyrhizobium diazoefficiens (strain JCM 10833 / BCRC 13528 / IAM 13628 / NBRC 14792 / USDA 110).